Here is a 461-residue protein sequence, read N- to C-terminus: UDP-N-acetylmuramate--L-alanine ligase (461 aa).

An ATP-binding site is contributed by 112–118 (GTHGKTT).

This sequence belongs to the MurCDEF family.

Its subcellular location is the cytoplasm. The catalysed reaction is UDP-N-acetyl-alpha-D-muramate + L-alanine + ATP = UDP-N-acetyl-alpha-D-muramoyl-L-alanine + ADP + phosphate + H(+). The protein operates within cell wall biogenesis; peptidoglycan biosynthesis. Cell wall formation. In Geobacter sp. (strain M21), this protein is UDP-N-acetylmuramate--L-alanine ligase.